Consider the following 195-residue polypeptide: Oocyte-secreted protein 3 (195 aa).

Positions 1–21 (MKAFVASGLLLLIFGMWRCSG) are cleaved as a signal peptide. N-linked (GlcNAc...) asparagine glycosylation is present at Asn102.

Belongs to the PLAC1 family. As to expression, oocyte-specific.

It localises to the secreted. In Mus musculus (Mouse), this protein is Oocyte-secreted protein 3.